The chain runs to 401 residues: S-adenosylmethionine synthase (401 aa).

His-16 contributes to the ATP binding site. Asp-18 lines the Mg(2+) pocket. Glu-44 is a binding site for K(+). Residues Glu-57 and Gln-100 each contribute to the L-methionine site. A flexible loop region spans residues 100-110 (QSPDIAQGVNE). Residues 174 to 176 (DAK), 241 to 242 (RF), Asp-250, 256 to 257 (RK), Ala-273, and Lys-277 each bind ATP. Asp-250 provides a ligand contact to L-methionine. Lys-281 contacts L-methionine.

This sequence belongs to the AdoMet synthase family. In terms of assembly, homotetramer; dimer of dimers. Requires Mg(2+) as cofactor. It depends on K(+) as a cofactor.

It is found in the cytoplasm. It carries out the reaction L-methionine + ATP + H2O = S-adenosyl-L-methionine + phosphate + diphosphate. Its pathway is amino-acid biosynthesis; S-adenosyl-L-methionine biosynthesis; S-adenosyl-L-methionine from L-methionine: step 1/1. Catalyzes the formation of S-adenosylmethionine (AdoMet) from methionine and ATP. The overall synthetic reaction is composed of two sequential steps, AdoMet formation and the subsequent tripolyphosphate hydrolysis which occurs prior to release of AdoMet from the enzyme. This Streptococcus equi subsp. zooepidemicus (strain MGCS10565) protein is S-adenosylmethionine synthase.